A 165-amino-acid chain; its full sequence is uncharacterized protein (165 aa).

Residues 1–38 (MFTVKEKNRQELEEELNDLEFQIYRMQENMKDLSKDAK) are a coiled coil.

This is an uncharacterized protein from Bacillus subtilis (strain 168).